The sequence spans 505 residues: Deoxyguanosinetriphosphate triphosphohydrolase (505 aa).

The HD domain occupies Arg66–Cys273.

The protein belongs to the dGTPase family. Type 1 subfamily. As to quaternary structure, homotetramer. Mg(2+) is required as a cofactor.

It catalyses the reaction dGTP + H2O = 2'-deoxyguanosine + triphosphate + H(+). Its function is as follows. dGTPase preferentially hydrolyzes dGTP over the other canonical NTPs. The protein is Deoxyguanosinetriphosphate triphosphohydrolase of Salmonella enteritidis PT4 (strain P125109).